The following is a 261-amino-acid chain: tRNA U34 carboxymethyltransferase (261 aa).

Residues Lys-25, Trp-39, Lys-44, Gly-63, 114–115, Tyr-135, and Arg-250 contribute to the carboxy-S-adenosyl-L-methionine site; that span reads VE.

Belongs to the class I-like SAM-binding methyltransferase superfamily. CmoB family. In terms of assembly, homotetramer.

The catalysed reaction is carboxy-S-adenosyl-L-methionine + 5-hydroxyuridine(34) in tRNA = 5-carboxymethoxyuridine(34) in tRNA + S-adenosyl-L-homocysteine + H(+). Catalyzes carboxymethyl transfer from carboxy-S-adenosyl-L-methionine (Cx-SAM) to 5-hydroxyuridine (ho5U) to form 5-carboxymethoxyuridine (cmo5U) at position 34 in tRNAs. The chain is tRNA U34 carboxymethyltransferase from Helicobacter pylori (strain HPAG1).